The primary structure comprises 499 residues: Cytochrome P450 705A12 (499 aa).

Residues 4–24 form a helical membrane-spanning segment; the sequence is LIIVDFQNISIFILLCLFSFL. Residue C439 coordinates heme.

Belongs to the cytochrome P450 family. Heme serves as cofactor.

The protein resides in the membrane. Functionally, may be involved in hydroxylation of the triterpene marneral. In Arabidopsis thaliana (Mouse-ear cress), this protein is Cytochrome P450 705A12.